We begin with the raw amino-acid sequence, 33 residues long: VAKCSTSECGHACQQAGCRNSGCRYGSCICVGC.

Intrachain disulfides connect C4-C23, C9-C28, C13-C30, and C18-C33.

The protein belongs to the short scorpion toxin superfamily. Potassium channel inhibitor family. Alpha-KTx 24 subfamily. Contains 4 disulfide bonds. As to expression, expressed by the venom gland.

Its subcellular location is the secreted. In terms of biological role, reversibly blocks voltage-gated potassium channels Kv1.2/KCNA2, Kv1.3/KCNA3 and, weakly, Shaker B. In Pandinus imperator (Emperor scorpion), this protein is Potassium channel toxin alpha-KTx 24.1.